Here is a 430-residue protein sequence, read N- to C-terminus: ATP-dependent RNA helicase cgh-1 (430 aa).

Positions 43-71 (VEFEDFCLGRDLLMGIFEKGWEKPSPIQE) match the Q motif motif. The Helicase ATP-binding domain maps to 74–244 (IGVALTGQDI…QKHMHKPYEI (171 aa)). 87-94 (AKNGTGKT) is an ATP binding site. The DEAD box signature appears at 192 to 195 (DEAD). In terms of domain architecture, Helicase C-terminal spans 254-414 (GVTQYYAFVQ…PIPKTVDPKL (161 aa)).

This sequence belongs to the DEAD box helicase family. DDX6/DHH1 subfamily. In terms of assembly, interacts with car-1 in a germline ribonucleoprotein complex. Interacts with ifet-1. Interacts with oma-1, which is a component of a ribonucleoprotein complex, in an RNA-dependent manner. Expression is restricted to two germline precursors Z2 and Z3 in L1 stage hermaphrodites, and is detectable specifically in the gonad at low levels into the L3 stage. Expression is significantly higher during the early L4 stage. In adults, expression remains gonad-specific and was not apparent in the somatically derived uterus. Expressed in germ granules (P granules); when associated with pgl-1.

It is found in the cytoplasm. It carries out the reaction ATP + H2O = ADP + phosphate + H(+). Its function is as follows. Probable RNA helicase required for oocyte and sperm function. Also required to prevent the physiological germline apoptosis mechanism killing essentially all developing oocytes. This Caenorhabditis elegans protein is ATP-dependent RNA helicase cgh-1 (cgh-1).